The following is a 449-amino-acid chain: Anther-specific proline-rich protein APG (449 aa).

Over residues 1-118 (PPKPQPKPPP…KPPAPSPPKP (118 aa)) the composition is skewed to pro residues. The interval 1–123 (PPKPQPKPPP…SPPKPQNKTI (123 aa)) is disordered. Serine 132 acts as the Nucleophile in catalysis. Active-site residues include aspartate 425 and histidine 428.

The protein belongs to the 'GDSL' lipolytic enzyme family. Found in anther, only in male fertile plants.

This chain is Anther-specific proline-rich protein APG (APG), found in Brassica napus (Rape).